Consider the following 304-residue polypeptide: bZIP transcription factor 50 (304 aa).

The Cytoplasmic portion of the chain corresponds to 1–222 (MDVEFFADLD…MQESAVLTET (222 aa)). 2 disordered regions span residues 26 to 60 (GSGV…SREA) and 94 to 163 (GEEE…ERKK). The segment covering 45–59 (SPESVSSRRPSPSRE) has biased composition (low complexity). Positions 127–139 (EKEDVEAEVDGDD) are enriched in acidic residues. In terms of domain architecture, bZIP spans 141 to 203 (MSKKKRRQMR…NMALRQSLLK (63 aa)). Residues 143–167 (KKKRRQMRNRDSAMKSRERKKMYVK) are basic motif. Over residues 150–163 (RNRDSAMKSRERKK) the composition is skewed to basic and acidic residues. Positions 169 to 183 (LETKSKYLEAECRRL) are leucine-zipper. A helical membrane pass occupies residues 223-243 (LPLVSLLWLVSIVCLLPVPGL). The Lumenal portion of the chain corresponds to 244–304 (PNRNPVARSS…GPFRLAAAAC (61 aa)).

Belongs to the bZIP family.

It localises to the endoplasmic reticulum membrane. It is found in the nucleus. Its activity is regulated as follows. Transcriptionally activated by IRE1 in response to endoplasmic reticulum (ER) stress. IRE1 cleaves a 20-bp fragment causing a frameshift of the mRNA transcript, leading to a nuclear isoform of the BZIP50 activator. In terms of biological role, transcription factor involved in endoplasmic reticulum (ER) stress response. Acts downstream of the ER stress sensors IRE1, BZIP39 and BZIP60 to activate BiP chaperone genes. This is bZIP transcription factor 50 from Oryza sativa subsp. japonica (Rice).